The primary structure comprises 428 residues: 2-isopropylmalate synthase 2 (428 aa).

Residues 40–302 (PFFMDVTLRD…EVPLNFSTIY (263 aa)) enclose the Pyruvate carboxyltransferase domain. D49, H241, H243, and N277 together coordinate Mn(2+).

It belongs to the alpha-IPM synthase/homocitrate synthase family. LeuA type 1 subfamily. In terms of assembly, homodimer. Requires Mn(2+) as cofactor.

It is found in the cytoplasm. The catalysed reaction is 3-methyl-2-oxobutanoate + acetyl-CoA + H2O = (2S)-2-isopropylmalate + CoA + H(+). It functions in the pathway amino-acid biosynthesis; L-leucine biosynthesis; L-leucine from 3-methyl-2-oxobutanoate: step 1/4. In terms of biological role, catalyzes the condensation of the acetyl group of acetyl-CoA with 3-methyl-2-oxobutanoate (2-ketoisovalerate) to form 3-carboxy-3-hydroxy-4-methylpentanoate (2-isopropylmalate). Has high alpha-isopropylmalate synthase activity and low citramalate synthase activity. The sequence is that of 2-isopropylmalate synthase 2 from Leptospira interrogans serogroup Icterohaemorrhagiae serovar Lai (strain 56601).